Here is a 333-residue protein sequence, read N- to C-terminus: Cap-specific mRNA (nucleoside-2'-O-)-methyltransferase (333 aa).

Tyr-22 contributes to the mRNA binding site. Gln-39, Tyr-66, Gly-68, Gly-72, Asp-95, Arg-97, Val-116, and Asp-138 together coordinate S-adenosyl-L-methionine. The tract at residues 169-249 (PVASSLKWRC…NKIVRNKVVI (81 aa)) is binding to NPH-I. Lys-175 serves as the catalytic For methyltransferase activity. MRNA-binding positions include 177-180 (RCPF), Asp-182, 205-207 (SAE), and Glu-233. The segment covering 305–320 (SHEPIQRKISSKDSMS) has biased composition (basic and acidic residues). The interval 305-333 (SHEPIQRKISSKDSMSKNRNSKRSVRGNK) is disordered. The span at 323–333 (RNSKRSVRGNK) shows a compositional bias: basic residues.

This sequence belongs to the class I-like SAM-binding methyltransferase superfamily. Poxvirus/kinetoplastid 2'-O-MTase family. As to quaternary structure, interacts with poly(A) polymerase catalytic subunit OPG063. Interacts with OPG109 and OPG123; these interactions might help linking transcription to capping and polyadenylation.

It localises to the virion. The enzyme catalyses a 5'-end (N(7)-methyl 5'-triphosphoguanosine)-ribonucleoside in mRNA + S-adenosyl-L-methionine = a 5'-end (N(7)-methyl 5'-triphosphoguanosine)-(2'-O-methyl-ribonucleoside) in mRNA + S-adenosyl-L-homocysteine + H(+). In terms of biological role, displays methyltransferase, positive regulation of the poly(A) polymerase and transcription elongation activities. Involved in the modification of both mRNA ends and in intermediate and late gene positive transcription elongation. At the mRNAs 5' end, methylates the ribose 2' OH group of the first transcribed nucleotide, thereby producing a 2'-O-methylpurine cap. At the 3' end, functions as a processivity factor which stimulates the activity of the viral poly(A) polymerase OPG063 that creates mRNA's poly(A) tail. In the presence of OPG102, OPG063 does not dissociate from the RNA allowing tail elongation to around 250 adenylates. The polypeptide is Cap-specific mRNA (nucleoside-2'-O-)-methyltransferase (OPG102) (Cynomys gunnisoni (Gunnison's prairie dog)).